The chain runs to 85 residues: Large ribosomal subunit protein bL27 (85 aa).

Residues 1–22 (MAHKKGASSTRNGRDSNAQRLG) form a disordered region. The span at 7 to 19 (ASSTRNGRDSNAQ) shows a compositional bias: polar residues.

The protein belongs to the bacterial ribosomal protein bL27 family.

This chain is Large ribosomal subunit protein bL27 (rpmA), found in Streptomyces griseus.